Reading from the N-terminus, the 374-residue chain is Isopentenyl-diphosphate delta-isomerase (374 aa).

Position 13 to 14 (13 to 14) interacts with substrate; it reads RK. FMN-binding positions include 71 to 73, serine 104, and asparagine 132; that span reads GMT. Residue 104-106 participates in substrate binding; it reads SQR. Glutamine 171 contacts substrate. Glutamate 172 contacts Mg(2+). Residues lysine 203, threonine 233, 282–284, and 303–304 contribute to the FMN site; these read GMR and AL.

Belongs to the IPP isomerase type 2 family. In terms of assembly, homooctamer. Dimer of tetramers. Requires FMN as cofactor. NADPH is required as a cofactor. It depends on Mg(2+) as a cofactor.

It is found in the cytoplasm. The catalysed reaction is isopentenyl diphosphate = dimethylallyl diphosphate. Its function is as follows. Involved in the biosynthesis of isoprenoids. Catalyzes the 1,3-allylic rearrangement of the homoallylic substrate isopentenyl (IPP) to its allylic isomer, dimethylallyl diphosphate (DMAPP). This is Isopentenyl-diphosphate delta-isomerase from Thermococcus onnurineus (strain NA1).